Here is an 88-residue protein sequence, read N- to C-terminus: Small ribosomal subunit protein uS17 (88 aa).

It belongs to the universal ribosomal protein uS17 family. As to quaternary structure, part of the 30S ribosomal subunit.

Functionally, one of the primary rRNA binding proteins, it binds specifically to the 5'-end of 16S ribosomal RNA. The sequence is that of Small ribosomal subunit protein uS17 from Mycoplasmopsis agalactiae (strain NCTC 10123 / CIP 59.7 / PG2) (Mycoplasma agalactiae).